A 189-amino-acid chain; its full sequence is Pyridoxal 5'-phosphate synthase subunit PdxT (189 aa).

L-glutamine is bound at residue 50–52 (GES). The Nucleophile role is filled by Cys-80. L-glutamine is bound by residues Arg-107 and 134-135 (IR). Residues His-169 and Glu-171 each act as charge relay system in the active site.

It belongs to the glutaminase PdxT/SNO family. As to quaternary structure, in the presence of PdxS, forms a dodecamer of heterodimers. Only shows activity in the heterodimer.

The catalysed reaction is aldehydo-D-ribose 5-phosphate + D-glyceraldehyde 3-phosphate + L-glutamine = pyridoxal 5'-phosphate + L-glutamate + phosphate + 3 H2O + H(+). The enzyme catalyses L-glutamine + H2O = L-glutamate + NH4(+). Its pathway is cofactor biosynthesis; pyridoxal 5'-phosphate biosynthesis. In terms of biological role, catalyzes the hydrolysis of glutamine to glutamate and ammonia as part of the biosynthesis of pyridoxal 5'-phosphate. The resulting ammonia molecule is channeled to the active site of PdxS. The chain is Pyridoxal 5'-phosphate synthase subunit PdxT from Picrophilus torridus (strain ATCC 700027 / DSM 9790 / JCM 10055 / NBRC 100828 / KAW 2/3).